Consider the following 294-residue polypeptide: 33 kDa chaperonin (294 aa).

Disulfide bonds link Cys239/Cys241 and Cys272/Cys275.

It belongs to the HSP33 family. Under oxidizing conditions two disulfide bonds are formed involving the reactive cysteines. Under reducing conditions zinc is bound to the reactive cysteines and the protein is inactive.

The protein localises to the cytoplasm. Its function is as follows. Redox regulated molecular chaperone. Protects both thermally unfolding and oxidatively damaged proteins from irreversible aggregation. Plays an important role in the bacterial defense system toward oxidative stress. This Lacticaseibacillus casei (strain BL23) (Lactobacillus casei) protein is 33 kDa chaperonin.